The chain runs to 609 residues: Putative 4-coumarate--CoA ligase-like 8 (609 aa).

ATP contacts are provided by S194, S195, G196, T197, T198, and K202. F252 and S256 together coordinate (E)-4-coumaroyl-AMP. R274 contributes to the CoA binding site. Positions 276 to 348 (SVEKTMAAVE…SCFPAVNLGQ (73 aa)) are SBD1. Residues G326, Q348, T353, and M361 each contribute to the (E)-4-coumaroyl-AMP site. Q348 and T353 together coordinate ATP. The interval 349 to 450 (CYGLTETTGI…VRGPSTMRGY (102 aa)) is SBD2. ATP-binding residues include D482 and R497. K499 and K503 together coordinate (E)-4-coumaroyl-AMP. A506 contributes to the CoA binding site. K589 contacts ATP.

It belongs to the ATP-dependent AMP-binding enzyme family. Requires Mg(2+) as cofactor.

The enzyme catalyses (E)-4-coumarate + ATP + CoA = (E)-4-coumaroyl-CoA + AMP + diphosphate. It catalyses the reaction (E)-4-coumarate + ATP + H(+) = (E)-4-coumaroyl-AMP + diphosphate. The catalysed reaction is (E)-4-coumaroyl-AMP + CoA = (E)-4-coumaroyl-CoA + AMP + H(+). Carboxylate--CoA ligase that may use 4-coumarate as substrate. Follows a two-step reaction mechanism, wherein the carboxylate substrate first undergoes adenylation by ATP, followed by a thioesterification in the presence of CoA to yield the final CoA thioester. In Oryza sativa subsp. japonica (Rice), this protein is Putative 4-coumarate--CoA ligase-like 8 (4CLL8).